A 145-amino-acid polypeptide reads, in one-letter code: D-aminoacyl-tRNA deacylase (145 aa).

A Gly-cisPro motif, important for rejection of L-amino acids motif is present at residues 137-138 (GP).

Belongs to the DTD family. In terms of assembly, homodimer.

The protein localises to the cytoplasm. The catalysed reaction is glycyl-tRNA(Ala) + H2O = tRNA(Ala) + glycine + H(+). It catalyses the reaction a D-aminoacyl-tRNA + H2O = a tRNA + a D-alpha-amino acid + H(+). An aminoacyl-tRNA editing enzyme that deacylates mischarged D-aminoacyl-tRNAs. Also deacylates mischarged glycyl-tRNA(Ala), protecting cells against glycine mischarging by AlaRS. Acts via tRNA-based rather than protein-based catalysis; rejects L-amino acids rather than detecting D-amino acids in the active site. By recycling D-aminoacyl-tRNA to D-amino acids and free tRNA molecules, this enzyme counteracts the toxicity associated with the formation of D-aminoacyl-tRNA entities in vivo and helps enforce protein L-homochirality. The sequence is that of D-aminoacyl-tRNA deacylase from Pseudomonas putida (strain W619).